The following is a 920-amino-acid chain: Coatomer subunit beta'-1 (920 aa).

WD repeat units follow at residues 13–52 (QRSERVKSVDLHPTEPWILASLYSGTLCIWNYQTQTMVKS), 55–94 (VTELPVRSAKFIARKQWVVAGADDMFIRVYNYNTMDKIKV), 97–136 (AHADYIRCVAVHPTLPYVLSSSDDMLIKLWDWEKGWLCTQ), 140–180 (GHSH…PNFT), 183–224 (AHLK…CVQT), 227–266 (GHTHNVSAVSFHPELPIIITGSEDGTVRIWHATTYRLENT), 350–392 (TCDL…GSAL), and 460–500 (RIDV…SYFD). The segment at 850–920 (LEQGDVLDEV…EQWVLTPPQE (71 aa)) is disordered. Residues 854–875 (DVLDEVGEEGEDGEEEEEEDRQ) show a composition bias toward acidic residues.

The protein belongs to the WD repeat COPB2 family. In terms of assembly, oligomeric complex that consists of at least the alpha, beta, beta', gamma, delta, epsilon and zeta subunits.

It localises to the cytoplasm. Its subcellular location is the golgi apparatus membrane. The protein localises to the cytoplasmic vesicle. It is found in the COPI-coated vesicle membrane. Its function is as follows. The coatomer is a cytosolic protein complex that binds to dilysine motifs and reversibly associates with Golgi non-clathrin-coated vesicles, which further mediate biosynthetic protein transport from the ER, via the Golgi up to the trans Golgi network. Coatomer complex is required for budding from Golgi membranes, and is essential for the retrograde Golgi-to-ER transport of dilysine-tagged proteins. This chain is Coatomer subunit beta'-1, found in Arabidopsis thaliana (Mouse-ear cress).